Consider the following 64-residue polypeptide: Translation machinery-associated protein 7 homolog (64 aa).

The segment at 1 to 64 (MTGREGGKKK…TGGIKKSGKK (64 aa)) is disordered. Residues 21–50 (EMDEEDMAFKQKQKEQQKAMEAAKQKAAKG) adopt a coiled-coil conformation. Positions 27–44 (MAFKQKQKEQQKAMEAAK) are enriched in basic and acidic residues.

Belongs to the TMA7 family.

In Aedes aegypti (Yellowfever mosquito), this protein is Translation machinery-associated protein 7 homolog.